The chain runs to 195 residues: Packaging protein 2 (195 aa).

Residues 1–124 are disordered; the sequence is MAPKKKLQLP…QEQQQRQGYR (124 aa). A compositionally biased stretch (acidic residues) spans 15–53; the sequence is TDEEEYWDSQAEEVLDEEEEMMEDWDSLDEASEAEEVSD. Over residues 54 to 63 the composition is skewed to low complexity; the sequence is ETPSPSVAFP.

The protein belongs to the adenoviridae splicing factor family. As to quaternary structure, part of a genome packaging complex composed of packaging proteins 1, 2 and 3; this complex specifically binds to the packaging sequence on the left end of viral genomic DNA and performs packaging of the viral genome. Self-assembles into higher-order structures.

It localises to the host nucleus. Its function is as follows. Component of the packaging machinery which encapsidates the viral DNA into preformed capsids and transcriptional activator of the viral major late promoter (MLP). Binds, along with packaging proteins 1 and 3, to the specific packaging sequence on the left end of viral genomic DNA and plays an active role in packaging of the viral genome into preformed capsids. Specifically binds to the 5'-TTTG-3' nucleotides of the repeats making up the packaging sequence. Forms a transcription factor called DEF-A through cooperative binding with packaging protein 1. DEF-A binds to downstream elements of the major late promoter (MLP) and stimulates transcription from the MLP after initiation of viral DNA replication. Simultaneously suppresses early gene expression and is thus likely to participate in the early-late switch in the expression pattern of the late viral proteins. May as well enhance transcription from IVa2 and pIX promoters. This chain is Packaging protein 2, found in Homo sapiens (Human).